We begin with the raw amino-acid sequence, 159 residues long: Putative 2'-deoxynucleoside 5'-phosphate N-hydrolase 1 (159 aa).

Residues 25–31 (FLSGSIR), tyrosine 40, histidine 58, glutamate 104, and 126–128 (SAM) contribute to the substrate site.

This sequence belongs to the 2'-deoxynucleoside 5'-phosphate N-hydrolase 1 family. In terms of assembly, monomer and homodimer.

The enzyme catalyses a pyrimidine 2'-deoxyribonucleoside 5'-phosphate + H2O = a pyrimidine nucleobase + 2-deoxy-D-ribose 5-phosphate. It carries out the reaction a purine 2'-deoxyribonucleoside 5'-phosphate + H2O = a purine nucleobase + 2-deoxy-D-ribose 5-phosphate. Catalyzes the cleavage of the N-glycosidic bond of deoxyribonucleoside 5'-monophosphates to yield deoxyribose 5-phosphate and a purine or pyrimidine base. The sequence is that of Putative 2'-deoxynucleoside 5'-phosphate N-hydrolase 1 from Methanosarcina barkeri (strain Fusaro / DSM 804).